The chain runs to 65 residues: Large ribosomal subunit protein bL35 (65 aa).

This sequence belongs to the bacterial ribosomal protein bL35 family.

This is Large ribosomal subunit protein bL35 from Nitrosomonas europaea (strain ATCC 19718 / CIP 103999 / KCTC 2705 / NBRC 14298).